We begin with the raw amino-acid sequence, 240 residues long: Cysteine-rich venom protein ablomin (240 aa).

A signal peptide spans 1–19 (MIVFIVLPILAAVLQQSSG). Positions 38–166 (VDLHNSLRRS…EYSYFYVCQY (129 aa)) constitute an SCP domain. 8 disulfides stabilise this stretch: C75/C153, C92/C167, C148/C164, C186/C193, C189/C198, C202/C235, C211/C229, and C220/C233. Residues 202-235 (CTQEDVFTNCNSLVQQSNCQHNYIKTNCPASCFC) enclose the ShKT domain.

This sequence belongs to the CRISP family. Expressed by the venom gland.

It localises to the secreted. In terms of biological role, blocks contraction of smooth muscle elicited by high potassium-induced depolarization, but does not block caffeine-stimulated contraction. Since high potassium-treatment activates voltage-gated channels and caffeine exposure activates ryanodine receptors, this toxin may target L-type voltage-gated calcium channels (Cav) (and not ryanodine receptors) on smooth muscle. This toxin also shows a little inhibition on cyclic nucleotide-gated CNGA1 channel. In Gloydius blomhoffii (Mamushi), this protein is Cysteine-rich venom protein ablomin.